Consider the following 182-residue polypeptide: UPF0301 protein NMC1274 (182 aa).

The protein belongs to the UPF0301 (AlgH) family.

In Neisseria meningitidis serogroup C / serotype 2a (strain ATCC 700532 / DSM 15464 / FAM18), this protein is UPF0301 protein NMC1274.